Consider the following 349-residue polypeptide: Interferon regulatory factor 2 (349 aa).

Residues Arg-5–Pro-113 constitute a DNA-binding region (IRF tryptophan pentad repeat). N6-acetyllysine occurs at positions 75 and 78. Residues Arg-117–Ser-148 form a disordered region. Over residues Pro-125–Pro-140 the composition is skewed to basic and acidic residues. Residue Lys-137 forms a Glycyl lysine isopeptide (Lys-Gly) (interchain with G-Cter in SUMO); alternate linkage. Lys-137 is covalently cross-linked (Glycyl lysine isopeptide (Lys-Gly) (interchain with G-Cter in SUMO2); alternate). Residue Lys-166 forms a Glycyl lysine isopeptide (Lys-Gly) (interchain with G-Cter in SUMO) linkage. Ser-225 is subject to Phosphoserine. The segment covering Ser-228–Val-239 has biased composition (polar residues). Residues Ser-228–His-251 form a disordered region. Residue Lys-260 forms a Glycyl lysine isopeptide (Lys-Gly) (interchain with G-Cter in SUMO2) linkage. Lys-293 is covalently cross-linked (Glycyl lysine isopeptide (Lys-Gly) (interchain with G-Cter in SUMO)). Residues Asn-297–Cys-349 are disordered. The segment covering Ser-314–Ser-324 has biased composition (low complexity).

This sequence belongs to the IRF family. In terms of assembly, interacts with BRD7, IRF2BP1 and IRF2BP2. Interacts with CREBBP in growing cells; the interaction acetylates IRF2 and regulates IRF2-dependent H4 promoter activity. In terms of processing, acetylated by CBP/ p300 during cell-growth. Acetylation on Lys-75 is required for stimulation of H4 promoter activity. The major sites of sumoylation are Lys-137 and Lys-293. Sumoylation with SUMO1 increases its transcriptional repressor activity on IRF1 and diminishes its ability to activate ISRE and H4 promoter. In terms of tissue distribution, expressed throughout the epithelium of the colon. Also expressed in lamina propria.

It is found in the nucleus. Functionally, specifically binds to the upstream regulatory region of type I IFN and IFN-inducible MHC class I genes (the interferon consensus sequence (ICS)) and represses those genes. Also acts as an activator for several genes including H4 and IL7. Constitutively binds to the ISRE promoter to activate IL7. Involved in cell cycle regulation through binding the site II (HiNF-M) promoter region of H4 and activating transcription during cell growth. Antagonizes IRF1 transcriptional activation. The polypeptide is Interferon regulatory factor 2 (IRF2) (Homo sapiens (Human)).